A 470-amino-acid polypeptide reads, in one-letter code: ATP synthase subunit beta (470 aa).

155–162 (GGAGVGKT) lines the ATP pocket.

Belongs to the ATPase alpha/beta chains family. F-type ATPases have 2 components, CF(1) - the catalytic core - and CF(0) - the membrane proton channel. CF(1) has five subunits: alpha(3), beta(3), gamma(1), delta(1), epsilon(1). CF(0) has three main subunits: a(1), b(2) and c(9-12). The alpha and beta chains form an alternating ring which encloses part of the gamma chain. CF(1) is attached to CF(0) by a central stalk formed by the gamma and epsilon chains, while a peripheral stalk is formed by the delta and b chains.

The protein localises to the cell membrane. The catalysed reaction is ATP + H2O + 4 H(+)(in) = ADP + phosphate + 5 H(+)(out). Functionally, produces ATP from ADP in the presence of a proton gradient across the membrane. The catalytic sites are hosted primarily by the beta subunits. This Staphylococcus haemolyticus (strain JCSC1435) protein is ATP synthase subunit beta.